The following is a 141-amino-acid chain: Large ribosomal subunit protein uL11 (141 aa).

It belongs to the universal ribosomal protein uL11 family. In terms of assembly, part of the ribosomal stalk of the 50S ribosomal subunit. Interacts with L10 and the large rRNA to form the base of the stalk. L10 forms an elongated spine to which L12 dimers bind in a sequential fashion forming a multimeric L10(L12)X complex. Post-translationally, one or more lysine residues are methylated.

In terms of biological role, forms part of the ribosomal stalk which helps the ribosome interact with GTP-bound translation factors. The sequence is that of Large ribosomal subunit protein uL11 from Chlorobium phaeobacteroides (strain DSM 266 / SMG 266 / 2430).